Consider the following 89-residue polypeptide: Small ribosomal subunit protein uS15 (89 aa).

Belongs to the universal ribosomal protein uS15 family. As to quaternary structure, part of the 30S ribosomal subunit. Forms a bridge to the 50S subunit in the 70S ribosome, contacting the 23S rRNA.

Functionally, one of the primary rRNA binding proteins, it binds directly to 16S rRNA where it helps nucleate assembly of the platform of the 30S subunit by binding and bridging several RNA helices of the 16S rRNA. In terms of biological role, forms an intersubunit bridge (bridge B4) with the 23S rRNA of the 50S subunit in the ribosome. This chain is Small ribosomal subunit protein uS15, found in Mycobacterium bovis (strain ATCC BAA-935 / AF2122/97).